A 198-amino-acid chain; its full sequence is Pyridoxal 5'-phosphate synthase subunit PdxT (198 aa).

Residue 50–52 participates in L-glutamine binding; the sequence is GES. The Nucleophile role is filled by Cys82. Residues Arg114 and 143 to 144 each bind L-glutamine; that span reads IR. Active-site charge relay system residues include His179 and Glu181.

This sequence belongs to the glutaminase PdxT/SNO family. In the presence of PdxS, forms a dodecamer of heterodimers. Only shows activity in the heterodimer.

It catalyses the reaction aldehydo-D-ribose 5-phosphate + D-glyceraldehyde 3-phosphate + L-glutamine = pyridoxal 5'-phosphate + L-glutamate + phosphate + 3 H2O + H(+). The catalysed reaction is L-glutamine + H2O = L-glutamate + NH4(+). Its pathway is cofactor biosynthesis; pyridoxal 5'-phosphate biosynthesis. Catalyzes the hydrolysis of glutamine to glutamate and ammonia as part of the biosynthesis of pyridoxal 5'-phosphate. The resulting ammonia molecule is channeled to the active site of PdxS. In Metallosphaera sedula (strain ATCC 51363 / DSM 5348 / JCM 9185 / NBRC 15509 / TH2), this protein is Pyridoxal 5'-phosphate synthase subunit PdxT.